We begin with the raw amino-acid sequence, 410 residues long: Translation initiation factor 2 subunit gamma (410 aa).

The region spanning Q9–E202 is the tr-type G domain. The segment at G18–T25 is G1. Residues D21, T25, G46, and T48 each contribute to the Mg(2+) site. Residue D21–T26 participates in GTP binding. Positions G46–K50 are G2. C61, C64, C73, and C76 together coordinate Zn(2+). The tract at residues D90 to G93 is G3. Residues N145 to E148 and S180 to L182 contribute to the GTP site. Positions N145–E148 are G4. A G5 region spans residues S180 to L182.

It belongs to the TRAFAC class translation factor GTPase superfamily. Classic translation factor GTPase family. EIF2G subfamily. As to quaternary structure, heterotrimer composed of an alpha, a beta and a gamma chain. It depends on Mg(2+) as a cofactor.

The catalysed reaction is GTP + H2O = GDP + phosphate + H(+). In terms of biological role, eIF-2 functions in the early steps of protein synthesis by forming a ternary complex with GTP and initiator tRNA. The chain is Translation initiation factor 2 subunit gamma from Thermococcus onnurineus (strain NA1).